The following is a 593-amino-acid chain: Glutamate decarboxylase 1 (593 aa).

Low complexity predominate over residues 1–12 (MASSTPSPATSS). The disordered stretch occupies residues 1–22 (MASSTPSPATSSNAGADPNTTN). A Phosphoserine modification is found at Ser-77. Residue 189–191 (QLS) participates in 4-aminobutanoate binding. Lys-404 bears the N6-(pyridoxal phosphate)lysine mark. Arg-566 is a binding site for 4-aminobutanoate.

It belongs to the group II decarboxylase family. In terms of assembly, homodimer. Pyridoxal 5'-phosphate is required as a cofactor. Expressed in brain and pancreatic islets.

The catalysed reaction is L-glutamate + H(+) = 4-aminobutanoate + CO2. In terms of biological role, catalyzes the synthesis of the inhibitory neurotransmitter gamma-aminobutyric acid (GABA) with pyridoxal 5'-phosphate as cofactor. The sequence is that of Glutamate decarboxylase 1 (Gad1) from Rattus norvegicus (Rat).